A 165-amino-acid polypeptide reads, in one-letter code: Peptidyl-prolyl cis-trans isomerase NIMA-interacting 1 (165 aa).

Positions 5-39 constitute a WW domain; the sequence is EKLPPGWEKRMSRSSGRVYYFNHITNASQWERPSG. Residues 33–56 are disordered; the sequence is QWERPSGGSTVGGSSKNGQGEPAK. N6-acetyllysine is present on Lys-48. The PpiC domain maps to 54 to 165; sequence PAKVRCSHLL…SGIHIILRTE (112 aa). Residues Ser-73 and Ser-110 each carry the phosphoserine modification.

In terms of assembly, interacts with STIL. Interacts with KIF20B. Interacts with NEK6. Interacts (via WW domain) with PRKX. Interacts with BTK. Interacts (via PpiC domain) with DAPK1. Interacts with the phosphorylated form of RAF1. Interacts (via WW domain) with ATCAY; upon NGF stimulation. Interacts with PML. Interacts with BCL6. Interacts with FBXW7, disrupting FBXW7 dimerization and promoting FBXW7 autoubiquitination and degradation. Directly interacts with RBBP8/CtIP; this interaction depends upon RBBP8 phosphorylation. Interacts (via WW domain) with IRAK3/IRAK-M (when phosphorylated at 'Ser-110') in response to IL33-mediated (but not TLR4 ligand LPS) dendritic cell stimulation. Interacts with PGK1 (when phosphorylated at 'Ser-203'); the interaction is direct, occurs under hypoxic conditions, and targets PGK1 to the mitochondrion by promoting interactions with the TOM complex. Phosphorylation at Ser-73 by DAPK1 results in inhibition of its catalytic activity, nuclear localization, and its ability to induce centrosome amplification, chromosome instability and cell transformation. Ser-73 is dephosphorylated upon IL33-stimulation of dendritic cells. As to expression, expressed in dendritic cells (at protein level).

The protein resides in the nucleus. Its subcellular location is the nucleus speckle. It localises to the cytoplasm. The catalysed reaction is [protein]-peptidylproline (omega=180) = [protein]-peptidylproline (omega=0). In terms of biological role, peptidyl-prolyl cis/trans isomerase (PPIase) that binds to and isomerizes specific phosphorylated Ser/Thr-Pro (pSer/Thr-Pro) motifs. By inducing conformational changes in a subset of phosphorylated proteins, acts as a molecular switch in multiple cellular processes. Displays a preference for an acidic residue N-terminal to the isomerized proline bond. Regulates mitosis presumably by interacting with NIMA and attenuating its mitosis-promoting activity. Down-regulates kinase activity of BTK. Can transactivate multiple oncogenes and induce centrosome amplification, chromosome instability and cell transformation. Required for the efficient dephosphorylation and recycling of RAF1 after mitogen activation. Binds and targets PML and BCL6 for degradation in a phosphorylation-dependent manner. Acts as a regulator of JNK cascade by binding to phosphorylated FBXW7, disrupting FBXW7 dimerization and promoting FBXW7 autoubiquitination and degradation: degradation of FBXW7 leads to subsequent stabilization of JUN. May facilitate the ubiquitination and proteasomal degradation of RBBP8/CtIP through CUL3/KLHL15 E3 ubiquitin-protein ligase complex, hence favors DNA double-strand repair through error-prone non-homologous end joining (NHEJ) over error-free, RBBP8-mediated homologous recombination (HR). Upon IL33-induced lung inflammation, catalyzes cis-trans isomerization of phosphorylated IRAK3/IRAK-M, inducing IRAK3 stabilization, nuclear translocation and expression of pro-inflammatory genes in dendritic cells. Catalyzes cis-trans isomerization of phosphorylated phosphoglycerate kinase PGK1 under hypoxic conditions to promote its binding to the TOM complex and targeting to the mitochondrion. This chain is Peptidyl-prolyl cis-trans isomerase NIMA-interacting 1 (Pin1), found in Mus musculus (Mouse).